The following is a 644-amino-acid chain: Sentrin-specific protease 1 (644 aa).

Residues 1–200 form an interaction with CCAR2 region; that stretch reads MDDIADRMRM…REIYRQLLQM (200 aa). Phosphoserine occurs at positions 57, 117, 132, and 157. Positions 92 to 117 are disordered; the sequence is QSANGQWRNSTPSSSSSLQKSRNSRS. Residues 99 to 117 show a composition bias toward low complexity; that stretch reads RNSTPSSSSSLQKSRNSRS. Disordered regions lie at residues 156 to 184 and 283 to 312; these read PSPSWSGSCRRSLLSPKKTQRRHVSTAEE and SKDSGTLHHPHHHHSVPHQPDNLAASNTQS. A Nuclear localization signal motif is present at residues 171–177; sequence PKKTQRR. The tract at residues 450–613 is protease; the sequence is LTITRKDIQT…GMFACKYADC (164 aa). Residues H533 and D550 contribute to the active site. The short motif at 574–577 is the Nuclear localization signal element; that stretch reads KKRK. The active-site Nucleophile is C603. The short motif at 628 to 634 is the Nuclear localization signal element; it reads PYFRKRM. The short motif at 635 to 644 is the Nuclear export signal element; sequence VWEILHRKLL.

It belongs to the peptidase C48 family. In terms of assembly, interacts with RBM33; promoting ALKBH5 desumoylation and subsequent activation. In terms of tissue distribution, highly expressed in testis. Expressed at lower levels in thymus, pancreas, spleen, liver, ovary and small intestine.

The protein resides in the nucleus. Its subcellular location is the cytoplasm. Protease that catalyzes two essential functions in the SUMO pathway. The first is the hydrolysis of an alpha-linked peptide bond at the C-terminal end of the small ubiquitin-like modifier (SUMO) propeptides, SUMO1, SUMO2 and SUMO3 leading to the mature form of the proteins. The second is the deconjugation of SUMO1, SUMO2 and SUMO3 from targeted proteins, by cleaving an epsilon-linked peptide bond between the C-terminal glycine of the mature SUMO and the lysine epsilon-amino group of the target protein. Deconjugates SUMO1 from HIPK2. Deconjugates SUMO1 from HDAC1 and BHLHE40/DEC1, which decreases its transcriptional repression activity. Deconjugates SUMO1 from CLOCK, which decreases its transcriptional activation activity. Deconjugates SUMO2 from MTA1. Inhibits N(6)-methyladenosine (m6A) RNA methylation by mediating SUMO1 deconjugation from METTL3 and ALKBH5: METTL3 inhibits the m6A RNA methyltransferase activity, while ALKBH5 desumoylation promotes m6A demethylation. Desumoylates CCAR2 which decreases its interaction with SIRT1. Deconjugates SUMO1 from GPS2. The sequence is that of Sentrin-specific protease 1 (SENP1) from Homo sapiens (Human).